The following is a 66-amino-acid chain: MPKLKTKSGAKKRFKLTATGKLKAGVAGKRHRLIGHNGKYIRQNRGTKVMSEADAKIIRTYLPYGL.

Belongs to the bacterial ribosomal protein bL35 family.

The polypeptide is Large ribosomal subunit protein bL35 (Caulobacter vibrioides (strain ATCC 19089 / CIP 103742 / CB 15) (Caulobacter crescentus)).